The following is a 253-amino-acid chain: Probable glutathione transferase omega-2 (253 aa).

The region spanning 25–105 (GIYRIYNMRF…YLDDLFPESR (81 aa)) is the GST N-terminal domain. Cys-35 acts as the Nucleophile in catalysis. Glutathione contacts are provided by residues Lys-62, Val-75, and 89–90 (ES). The GST C-terminal domain occupies 110–238 (DPYEKVQQKL…SQPTEMGVGF (129 aa)).

The protein belongs to the GST superfamily. Omega family.

The catalysed reaction is RX + glutathione = an S-substituted glutathione + a halide anion + H(+). It carries out the reaction L-dehydroascorbate + 2 glutathione = glutathione disulfide + L-ascorbate. The enzyme catalyses methylarsonate + 2 glutathione + H(+) = methylarsonous acid + glutathione disulfide + H2O. Its function is as follows. Exhibits glutathione-dependent thiol transferase activity. Has dehydroascorbate reductase activity and may contribute to the recycling of ascorbic acid. Participates in the biotransformation of inorganic arsenic and reduces monomethylarsonic acid (MMA). In Caenorhabditis briggsae, this protein is Probable glutathione transferase omega-2.